Here is a 389-residue protein sequence, read N- to C-terminus: Gastricsin (389 aa).

An N-terminal signal peptide occupies residues M1–A16. The propeptide at K17–F59 is activation peptide. The 314-residue stretch at Y73–A386 folds into the Peptidase A1 domain. D91 is a catalytic residue. Intrachain disulfides connect C104-C109 and C268-C272. Residue D277 is part of the active site. C311 and C344 are oxidised to a cystine.

The protein belongs to the peptidase A1 family.

The protein resides in the secreted. The enzyme catalyses More restricted specificity than pepsin A, but shows preferential cleavage at Tyr-|-Xaa bonds. High activity on hemoglobin.. Functionally, hydrolyzes a variety of proteins. This chain is Gastricsin (PGC), found in Suncus murinus (Asian house shrew).